Reading from the N-terminus, the 512-residue chain is Activin receptor type-2B (512 aa).

Positions 1–24 (MSASWLTLAVLCATLGAGPGHGEA) are cleaved as a signal peptide. Residues 25–137 (ETRECIYYNA…PPPPTPSLLN (113 aa)) are Extracellular-facing. 5 disulfide bridges follow: cysteine 29–cysteine 59, cysteine 49–cysteine 77, cysteine 84–cysteine 103, cysteine 90–cysteine 102, and cysteine 104–cysteine 109. N-linked (GlcNAc...) asparagine glycosylation is found at asparagine 42 and asparagine 65. The chain crosses the membrane as a helical span at residues 138–158 (ILVYSLLPIAVLSVAILLAFW). The Cytoplasmic segment spans residues 159-512 (MYRHRKPPYG…VDLPPKESSI (354 aa)). The Protein kinase domain occupies 190–478 (LQLLEIKARG…LSAGCVEERI (289 aa)). ATP-binding positions include 196 to 204 (KARGRFGCV) and lysine 217. Aspartate 321 acts as the Proton acceptor in catalysis.

Belongs to the protein kinase superfamily. TKL Ser/Thr protein kinase family. TGFB receptor subfamily. The cofactor is Mg(2+). It depends on Mn(2+) as a cofactor. In terms of tissue distribution, not expressed in hen anterior pituitary during the ovulatory cycle but expressed in the ovarian follicle.

The protein resides in the membrane. It catalyses the reaction L-threonyl-[receptor-protein] + ATP = O-phospho-L-threonyl-[receptor-protein] + ADP + H(+). The catalysed reaction is L-seryl-[receptor-protein] + ATP = O-phospho-L-seryl-[receptor-protein] + ADP + H(+). Functionally, on ligand binding, forms a receptor complex consisting of two type II and two type I transmembrane serine/threonine kinases. Type II receptors phosphorylate and activate type I receptors which autophosphorylate, then bind and activate SMAD transcriptional regulators. Receptor for activin A, activin B and inhibin A. May modulate neuropeptide expression in dorsal root ganglia (DRG) neurons and ovarian follicle development. The sequence is that of Activin receptor type-2B (ACVR2B) from Gallus gallus (Chicken).